Reading from the N-terminus, the 427-residue chain is Inward rectifier potassium channel 2 (427 aa).

Over 1–81 the chain is Cytoplasmic; sequence MGSVRTNRYS…IFTTCVDIRW (81 aa). Cys-76 carries the post-translational modification S-nitrosocysteine. Residues 82–106 form a helical membrane-spanning segment; the sequence is RWMLVIFCLAFVLSWLFFGCVFWLI. Residues 107–128 lie on the Extracellular side of the membrane; it reads ALLHGDLDASKESKACVSEVNS. Positions 129–140 form an intramembrane region, helical; Pore-forming; it reads FTAAFLFSIETQ. Positions 141 to 147 form an intramembrane region, pore-forming; sequence TTIGYGF. A Selectivity filter motif is present at residues 142-147; the sequence is TIGYGF. Over 148-156 the chain is Extracellular; sequence RCVTDECPI. Residues 157–178 traverse the membrane as a helical segment; the sequence is AVFMVVFQSIVGCIIDAFIIGA. Over 179–427 the chain is Cytoplasmic; sequence VMAKMAKPKK…PRPLRRESEI (249 aa). The segment at 181–208 is polyphosphoinositide (PIP2)-binding; the sequence is AKMAKPKKRNETLVFSHNAVIAMRDGKL. Residues 384–427 are disordered; it reads SKEEDDSENGVPESTSTDTPPDIDLHNQASVPLEPRPLRRESEI. The PDZ-binding motif lies at 425-427; the sequence is SEI.

Belongs to the inward rectifier-type potassium channel (TC 1.A.2.1) family. KCNJ2 subfamily. As to quaternary structure, homotetramer. Homomultimeric and heteromultimeric association with KCNJ4/Kir2.3. Can form heteromeric channels with Kir2.6/KCNJ18. Associates, via its PDZ-recognition domain, with a complex containing LIN7A, LIN7B, LIN7C, DLG1, CASK and APBA1. Post-translationally, S-nitrosylation increases the open probability and inward rectifying currents.

It is found in the cell membrane. The protein localises to the sarcolemma. Its subcellular location is the T-tubule. It carries out the reaction K(+)(in) = K(+)(out). Activated by phosphatidylinositol 4,5 biphosphate (PtdIns(4,5)P2). Its function is as follows. Inward rectifier potassium channels are characterized by a greater tendency to allow potassium to flow into the cell rather than out of it. Their voltage dependence is regulated by the concentration of extracellular potassium; as external potassium is raised, the voltage range of the channel opening shifts to more positive voltages. The inward rectification is mainly due to the blockage of outward current by internal magnesium. Blocked by external barium or cesium. Probably participates in establishing action potential waveform and excitability of neuronal and muscle tissues. The protein is Inward rectifier potassium channel 2 (KCNJ2) of Cavia porcellus (Guinea pig).